The primary structure comprises 140 residues: Class I hydrophobin 1 (140 aa).

An N-terminal signal peptide occupies residues 1 to 18; that stretch reads MKFAAVVVLAAAAAAVSA. The disordered stretch occupies residues 22–60; that stretch reads AQRMARGLPPKAPIRRHGTPADTEKRSHPSSTGGGQCNT. 4 disulfides stabilise this stretch: C58/C119, C65/C113, C66/C99, and C120/C133.

It belongs to the fungal hydrophobin family. As to quaternary structure, self-assembles to form functional amyloid fibrils called rodlets. Self-assembly into fibrillar rodlets occurs spontaneously at hydrophobic:hydrophilic interfaces and the rodlets further associate laterally to form amphipathic monolayers.

The protein resides in the secreted. It is found in the cell wall. Aerial growth, conidiation, and dispersal of filamentous fungi in the environment rely upon a capability of their secreting small amphipathic proteins called hydrophobins (HPBs) with low sequence identity. Class I can self-assemble into an outermost layer of rodlet bundles on aerial cell surfaces, conferring cellular hydrophobicity that supports fungal growth, development and dispersal; whereas Class II form highly ordered films at water-air interfaces through intermolecular interactions but contribute nothing to the rodlet structure. The protein is Class I hydrophobin 1 of Pisolithus tinctorius (Dead man's foot).